A 591-amino-acid polypeptide reads, in one-letter code: Aspartate--tRNA ligase (591 aa).

E173 is a binding site for L-aspartate. The aspartate stretch occupies residues 197 to 200; that stretch reads QLFK. R219 contributes to the L-aspartate binding site. ATP-binding positions include 219–221 and Q228; that span reads RDE. H446 lines the L-aspartate pocket. E482 lines the ATP pocket. Residue R489 coordinates L-aspartate. 534–537 is a binding site for ATP; that stretch reads GLDR.

It belongs to the class-II aminoacyl-tRNA synthetase family. Type 1 subfamily. Homodimer.

It is found in the cytoplasm. The catalysed reaction is tRNA(Asp) + L-aspartate + ATP = L-aspartyl-tRNA(Asp) + AMP + diphosphate. In terms of biological role, catalyzes the attachment of L-aspartate to tRNA(Asp) in a two-step reaction: L-aspartate is first activated by ATP to form Asp-AMP and then transferred to the acceptor end of tRNA(Asp). The chain is Aspartate--tRNA ligase from Limosilactobacillus fermentum (strain NBRC 3956 / LMG 18251) (Lactobacillus fermentum).